Consider the following 1465-residue polypeptide: Transcriptional elongation regulator MINIYO (1465 aa).

Disordered regions lie at residues 27–85 (KGIS…AEER), 186–211 (LNAS…ESDI), and 1113–1135 (TIHE…SSTI).

It belongs to the RPAP1 family. In terms of assembly, interacts with HAG3, NRPB3 and NRPB10L. In terms of tissue distribution, expressed in root and shoot apices and in leaf and flower primordia. Detected in the endosperm, embryo, meristems and in organ primordia, but not in mature cells. Found exclusively in the vascular bundles in mature leaves.

It localises to the cytoplasm. The protein localises to the nucleus. In terms of biological role, positive regulator of transcriptional elongation that is essential for cells to initiate differentiation. Interacts with RNA polymerase II and the Elongator complex and is required to sustain global levels of transcriptional elongation activity, specifically in differentiating tissues. This Arabidopsis thaliana (Mouse-ear cress) protein is Transcriptional elongation regulator MINIYO.